We begin with the raw amino-acid sequence, 373 residues long: Transaldolase (373 aa).

Lysine 143 acts as the Schiff-base intermediate with substrate in catalysis.

Belongs to the transaldolase family. Type 2 subfamily.

It localises to the cytoplasm. The enzyme catalyses D-sedoheptulose 7-phosphate + D-glyceraldehyde 3-phosphate = D-erythrose 4-phosphate + beta-D-fructose 6-phosphate. Its pathway is carbohydrate degradation; pentose phosphate pathway; D-glyceraldehyde 3-phosphate and beta-D-fructose 6-phosphate from D-ribose 5-phosphate and D-xylulose 5-phosphate (non-oxidative stage): step 2/3. Transaldolase is important for the balance of metabolites in the pentose-phosphate pathway. The chain is Transaldolase (tal) from Mycobacterium bovis (strain ATCC BAA-935 / AF2122/97).